The chain runs to 345 residues: Putative membrane protein ORF59 (345 aa).

Helical transmembrane passes span 46–63, 101–118, 147–165, and 265–286; these read LVFAYVTLVLLYVIMMLI, IVFVALGVNFLLVILVFL, IFGIMSFIFVFIITVFSIL, and VVPVILLVMFILYMFLHLWMVI.

It is found in the membrane. The sequence is that of Putative membrane protein ORF59 (ORF59) from Ictalurid herpesvirus 1 (strain Auburn) (IcHV-1).